Reading from the N-terminus, the 171-residue chain is Protein GrpE (171 aa).

Positions 1–22 are disordered; the sequence is MNHEHPDIESQQSAADAAAAAG.

Belongs to the GrpE family. Homodimer.

Its subcellular location is the cytoplasm. Functionally, participates actively in the response to hyperosmotic and heat shock by preventing the aggregation of stress-denatured proteins, in association with DnaK and GrpE. It is the nucleotide exchange factor for DnaK and may function as a thermosensor. Unfolded proteins bind initially to DnaJ; upon interaction with the DnaJ-bound protein, DnaK hydrolyzes its bound ATP, resulting in the formation of a stable complex. GrpE releases ADP from DnaK; ATP binding to DnaK triggers the release of the substrate protein, thus completing the reaction cycle. Several rounds of ATP-dependent interactions between DnaJ, DnaK and GrpE are required for fully efficient folding. The sequence is that of Protein GrpE from Stenotrophomonas maltophilia (strain R551-3).